A 106-amino-acid chain; its full sequence is MKAKPSHPAFSMSTSLRVSPSIHGYHFDTASRKKAVGNIFENIDQEALQRLFRNSGDKKAEERAKIIFAIDQDLEEKTRALMALKKRTKDKLFQFLKLRKYSIKVH.

In terms of assembly, monomer. Interacts with NOTCH2 (via ANK repeats), the interaction inhibits the nuclear translocation of NOTCH2 N2ICD. Interacts (C-terminus) with CBY1 (C-terminus), TCIM competes with CTNNB1 for the interaction with CBY1.

It is found in the cytoplasm. It localises to the nucleus. The protein localises to the nucleolus. Its subcellular location is the nucleus speckle. In terms of biological role, seems to be involved in the regulation of cell growth an differentiation, may play different and opposite roles depending on the tissue or cell type. May enhance the WNT-CTNNB1 pathway by relieving antagonistic activity of CBY1. Enhances the proliferation of follicular dendritic cells. Plays a role in the mitogen-activated MAPK2/3 signaling pathway, positively regulates G1-to-S-phase transition of the cell cycle. In endothelial cells, enhances key inflammatory mediators and inflammatory response through the modulation of NF-kappaB transcriptional regulatory activity. Involved in the regulation of heat shock response, seems to play a positive feedback with HSF1 to modulate heat-shock downstream gene expression. Plays a role in the regulation of hematopoiesis even if the mechanisms are unknown. In cancers such as thyroid or lung cancer, it has been described as promoter of cell proliferation, G1-to-S-phase transition and inhibitor of apoptosis. However, it negatively regulates self-renewal of liver cancer cells via suppresion of NOTCH2 signaling. In Bos taurus (Bovine), this protein is Transcriptional and immune response regulator (TCIM).